The following is a 141-amino-acid chain: 3-hydroxyacyl-[acyl-carrier-protein] dehydratase FabZ (141 aa).

Residue His48 is part of the active site.

The protein belongs to the thioester dehydratase family. FabZ subfamily.

The protein resides in the cytoplasm. The catalysed reaction is a (3R)-hydroxyacyl-[ACP] = a (2E)-enoyl-[ACP] + H2O. Functionally, involved in unsaturated fatty acids biosynthesis. Catalyzes the dehydration of short chain beta-hydroxyacyl-ACPs and long chain saturated and unsaturated beta-hydroxyacyl-ACPs. The polypeptide is 3-hydroxyacyl-[acyl-carrier-protein] dehydratase FabZ (Bacillus subtilis (strain 168)).